A 122-amino-acid chain; its full sequence is Large ribosomal subunit protein uL14 (122 aa).

The protein belongs to the universal ribosomal protein uL14 family. In terms of assembly, part of the 50S ribosomal subunit. Forms a cluster with proteins L3 and L19. In the 70S ribosome, L14 and L19 interact and together make contacts with the 16S rRNA in bridges B5 and B8.

Binds to 23S rRNA. Forms part of two intersubunit bridges in the 70S ribosome. This chain is Large ribosomal subunit protein uL14, found in Latilactobacillus sakei subsp. sakei (strain 23K) (Lactobacillus sakei subsp. sakei).